A 388-amino-acid chain; its full sequence is Chaperone protein DnaJ (388 aa).

Positions 5–69 constitute a J domain; the sequence is DYYDVLGVDK…QKRAQYDQFG (65 aa). The segment at 145–227 adopts a CR-type zinc-finger fold; the sequence is GKKTDITYTR…CHGQGTVDKK (83 aa). Zn(2+) is bound by residues C158, C161, C175, C178, C201, C204, C215, and C218. 4 CXXCXGXG motif repeats span residues 158–165, 175–182, 201–208, and 215–222; these read CPTCDGSG, CDKCHGSG, CDKCGGRG, and CQTCHGQG.

The protein belongs to the DnaJ family. As to quaternary structure, homodimer. Zn(2+) serves as cofactor.

The protein localises to the cytoplasm. Participates actively in the response to hyperosmotic and heat shock by preventing the aggregation of stress-denatured proteins and by disaggregating proteins, also in an autonomous, DnaK-independent fashion. Unfolded proteins bind initially to DnaJ; upon interaction with the DnaJ-bound protein, DnaK hydrolyzes its bound ATP, resulting in the formation of a stable complex. GrpE releases ADP from DnaK; ATP binding to DnaK triggers the release of the substrate protein, thus completing the reaction cycle. Several rounds of ATP-dependent interactions between DnaJ, DnaK and GrpE are required for fully efficient folding. Also involved, together with DnaK and GrpE, in the DNA replication of plasmids through activation of initiation proteins. The protein is Chaperone protein DnaJ of Lactobacillus johnsonii (strain CNCM I-12250 / La1 / NCC 533).